The following is a 64-amino-acid chain: Frontoxin IV (64 aa).

5 disulfides stabilise this stretch: cysteine 3–cysteine 24, cysteine 6–cysteine 11, cysteine 17–cysteine 41, cysteine 45–cysteine 57, and cysteine 58–cysteine 63.

As to expression, expressed by the venom gland.

It localises to the secreted. In terms of biological role, produces peripheral paralysis by blocking neuromuscular transmission at the postsynaptic site. Binds to the muscular nicotinic acetylcholine receptor (nAChR). This is Frontoxin IV from Micrurus frontalis (Coral snake).